A 391-amino-acid chain; its full sequence is Carbamoyl phosphate synthase small chain (391 aa).

Residues 1–187 (MAGVKERAVL…PLPYAWPTLK (187 aa)) are CPSase. Positions 50, 239, and 241 each coordinate L-glutamine. The 186-residue stretch at 191–376 (RIVVMDFGIK…LEEVEAFHGA (186 aa)) folds into the Glutamine amidotransferase type-1 domain. Cys266 (nucleophile) is an active-site residue. 5 residues coordinate L-glutamine: Leu267, Gln270, Asn308, Gly310, and Tyr311. Active-site residues include His349 and Glu351.

Belongs to the CarA family. Composed of two chains; the small (or glutamine) chain promotes the hydrolysis of glutamine to ammonia, which is used by the large (or ammonia) chain to synthesize carbamoyl phosphate. Tetramer of heterodimers (alpha,beta)4.

The catalysed reaction is hydrogencarbonate + L-glutamine + 2 ATP + H2O = carbamoyl phosphate + L-glutamate + 2 ADP + phosphate + 2 H(+). It catalyses the reaction L-glutamine + H2O = L-glutamate + NH4(+). Its pathway is amino-acid biosynthesis; L-arginine biosynthesis; carbamoyl phosphate from bicarbonate: step 1/1. It functions in the pathway pyrimidine metabolism; UMP biosynthesis via de novo pathway; (S)-dihydroorotate from bicarbonate: step 1/3. Small subunit of the glutamine-dependent carbamoyl phosphate synthetase (CPSase). CPSase catalyzes the formation of carbamoyl phosphate from the ammonia moiety of glutamine, carbonate, and phosphate donated by ATP, constituting the first step of 2 biosynthetic pathways, one leading to arginine and/or urea and the other to pyrimidine nucleotides. The small subunit (glutamine amidotransferase) binds and cleaves glutamine to supply the large subunit with the substrate ammonia. This chain is Carbamoyl phosphate synthase small chain, found in Thermus thermophilus (strain ATCC BAA-163 / DSM 7039 / HB27).